Consider the following 438-residue polypeptide: V-type ATP synthase beta chain (438 aa).

The protein belongs to the ATPase alpha/beta chains family.

Functionally, produces ATP from ADP in the presence of a proton gradient across the membrane. The V-type beta chain is a regulatory subunit. The polypeptide is V-type ATP synthase beta chain (atpB) (Chlamydia trachomatis serovar D (strain ATCC VR-885 / DSM 19411 / UW-3/Cx)).